Reading from the N-terminus, the 120-residue chain is Small ribosomal subunit protein uS12c (120 aa).

Belongs to the universal ribosomal protein uS12 family. Part of the 30S ribosomal subunit.

The protein localises to the plastid. The protein resides in the apicoplast. In terms of biological role, with S4 and S5 plays an important role in translational accuracy. Located at the interface of the 30S and 50S subunits. The sequence is that of Small ribosomal subunit protein uS12c (rps12) from Eimeria tenella (Coccidian parasite).